The following is a 364-amino-acid chain: Chorismate synthase (364 aa).

Arg-47 contributes to the NADP(+) binding site. FMN contacts are provided by residues 124-126 (RAS), Gly-287, 302-306 (KPTAT), and Arg-328.

The protein belongs to the chorismate synthase family. Homotetramer. It depends on FMNH2 as a cofactor.

The catalysed reaction is 5-O-(1-carboxyvinyl)-3-phosphoshikimate = chorismate + phosphate. Its pathway is metabolic intermediate biosynthesis; chorismate biosynthesis; chorismate from D-erythrose 4-phosphate and phosphoenolpyruvate: step 7/7. Functionally, catalyzes the anti-1,4-elimination of the C-3 phosphate and the C-6 proR hydrogen from 5-enolpyruvylshikimate-3-phosphate (EPSP) to yield chorismate, which is the branch point compound that serves as the starting substrate for the three terminal pathways of aromatic amino acid biosynthesis. This reaction introduces a second double bond into the aromatic ring system. The sequence is that of Chorismate synthase from Prochlorococcus marinus subsp. pastoris (strain CCMP1986 / NIES-2087 / MED4).